The sequence spans 627 residues: tRNA uridine 5-carboxymethylaminomethyl modification enzyme MnmG (627 aa).

FAD is bound by residues 13-18 (GGGHAG), Val-125, and Ser-180. 274-288 (GPRYCPSIEDKVVRF) lines the NAD(+) pocket. Position 371 (Gln-371) interacts with FAD.

It belongs to the MnmG family. In terms of assembly, homodimer. Heterotetramer of two MnmE and two MnmG subunits. It depends on FAD as a cofactor.

The protein localises to the cytoplasm. Its function is as follows. NAD-binding protein involved in the addition of a carboxymethylaminomethyl (cmnm) group at the wobble position (U34) of certain tRNAs, forming tRNA-cmnm(5)s(2)U34. The chain is tRNA uridine 5-carboxymethylaminomethyl modification enzyme MnmG from Francisella tularensis subsp. tularensis (strain WY96-3418).